A 218-amino-acid polypeptide reads, in one-letter code: 7-cyano-7-deazaguanine synthase (218 aa).

An ATP-binding site is contributed by 9-19; the sequence is FSGGMDSFTVL. 4 residues coordinate Zn(2+): C185, C193, C196, and C199.

This sequence belongs to the QueC family. The cofactor is Zn(2+).

The enzyme catalyses 7-carboxy-7-deazaguanine + NH4(+) + ATP = 7-cyano-7-deazaguanine + ADP + phosphate + H2O + H(+). Its pathway is purine metabolism; 7-cyano-7-deazaguanine biosynthesis. Functionally, catalyzes the ATP-dependent conversion of 7-carboxy-7-deazaguanine (CDG) to 7-cyano-7-deazaguanine (preQ(0)). The protein is 7-cyano-7-deazaguanine synthase of Pseudoalteromonas atlantica (strain T6c / ATCC BAA-1087).